The following is a 249-amino-acid chain: 1-(5-phosphoribosyl)-5-[(5-phosphoribosylamino)methylideneamino] imidazole-4-carboxamide isomerase (249 aa).

Residue Asp-11 is the Proton acceptor of the active site. Asp-133 acts as the Proton donor in catalysis.

Belongs to the HisA/HisF family.

It localises to the cytoplasm. The enzyme catalyses 1-(5-phospho-beta-D-ribosyl)-5-[(5-phospho-beta-D-ribosylamino)methylideneamino]imidazole-4-carboxamide = 5-[(5-phospho-1-deoxy-D-ribulos-1-ylimino)methylamino]-1-(5-phospho-beta-D-ribosyl)imidazole-4-carboxamide. It participates in amino-acid biosynthesis; L-histidine biosynthesis; L-histidine from 5-phospho-alpha-D-ribose 1-diphosphate: step 4/9. The polypeptide is 1-(5-phosphoribosyl)-5-[(5-phosphoribosylamino)methylideneamino] imidazole-4-carboxamide isomerase (Actinobacillus succinogenes (strain ATCC 55618 / DSM 22257 / CCUG 43843 / 130Z)).